A 246-amino-acid polypeptide reads, in one-letter code: DNA repair protein RecO (246 aa).

This sequence belongs to the RecO family.

Involved in DNA repair and RecF pathway recombination. This chain is DNA repair protein RecO, found in Alkaliphilus metalliredigens (strain QYMF).